The chain runs to 254 residues: Phycobilisome rod-core linker polypeptide CpcG3 (254 aa).

One can recognise a PBS-linker domain in the interval 11-191; the sequence is SSQNHRVKSF…DFQETAGTVK (181 aa).

This sequence belongs to the phycobilisome linker protein family. The phycobilisome is a hemidiscoidal structure that is composed of two distinct substructures: a core complex and a number of rods radiating from the core.

It localises to the cellular thylakoid membrane. Functionally, rod-core linker protein required for attachment of phycocyanin to allophycocyanin in cores of phycobilisomes. Linker polypeptides determine the state of aggregation and the location of the disk-shaped phycobiliprotein units within the phycobilisome and modulate their spectroscopic properties in order to mediate a directed and optimal energy transfer. The chain is Phycobilisome rod-core linker polypeptide CpcG3 (cpcG3) from Mastigocladus laminosus (Fischerella sp.).